Consider the following 591-residue polypeptide: ATPase family AAA domain-containing protein 3A (591 aa).

Residues 1–52 (MSWLFGIKGPKGEGTGPPLPLPPAQPGAESGGDRGAGDRPSPKDKWSNFDPT) form a disordered region. Serine 2 is modified (N-acetylserine). Residues 2–49 (SWLFGIKGPKGEGTGPPLPLPPAQPGAESGGDRGAGDRPSPKDKWSNF) form a required for interaction with the inner surface of the mitochondrial outer membrane region. At 2 to 245 (SWLFGIKGPK…FRAFVTDWDK (244 aa)) the chain is on the mitochondrial intermembrane side. Positions 31-47 (GGDRGAGDRPSPKDKWS) are enriched in basic and acidic residues. Residues 55 to 216 (ERAAKAAREL…REQIRLKAAE (162 aa)) are a coiled coil. The chain crosses the membrane as a helical span at residues 246 to 263 (VTATVAGLTLLAVGVYSA). Residues 264–591 (KNATSVAGRY…KPPHPSLLSC (328 aa)) are Mitochondrial matrix-facing. The segment at 289-304 (RISVLEALRHPIQVSR) is S100B-binding. Residue 351 to 358 (GPPGTGKT) coordinates ATP. Lysine 490 bears the N6-acetyllysine; alternate mark. N6-succinyllysine; alternate is present on lysine 490. N6-acetyllysine occurs at positions 494 and 512.

It belongs to the AAA ATPase family. Can form homooligomers. Homodimer formation at the N-terminus may be regulated by ATP and is required for the interaction with the inner surface of the mitochondrial outer membrane and correct mitochondrial homeostasis. Interacts with components of the mitochondrial ribosome and with other proteins involved in mitochondrial RNA metabolism. May also interact with protein involved in lipid metabolism, including STARD9. May interact with FAM210A. Interacts with GADD45GIP1. Interacts with S100B in a Ca(+2)- and Zn(+2)-dependent manner; this interaction probably occurs in the cytosol prior to mitochondrial targeting. S100B could assist ATAD3A cytoplasmic processing, preventing aggregation and favoring mitochondrial localization. Interacts with HSP60/HSPD1. Interacts with CLPB. Interacts with EIF2AK3/PERK; ATAD3A and EIF2S1/eIF-2-alpha occupy a common binding site within the cytoplasmic loop of EIF2AK3/PERK, leading to prevent EIF2AK3/PERK association with its substrate EIF2S1/eIF-2-alpha.

Its subcellular location is the mitochondrion inner membrane. It localises to the mitochondrion matrix. The protein resides in the mitochondrion nucleoid. The catalysed reaction is ATP + H2O = ADP + phosphate + H(+). Functionally, essential for mitochondrial network organization, mitochondrial metabolism and cell growth at organism and cellular level. May play an important role in mitochondrial protein synthesis. May also participate in mitochondrial DNA replication. May bind to mitochondrial DNA D-loops and contribute to nucleoid stability. Required for enhanced channeling of cholesterol for hormone-dependent steroidogenesis. Involved in mitochondrial-mediated antiviral innate immunity. Required to protect mitochondria from the PERK-mediated unfolded protein response: specifically inhibits the activity of EIF2AK3/PERK at mitochondria-endoplasmic reticulum contact sites, thereby providing a safe haven for mitochondrial protein translation during endoplasmic reticulum stress. Ability to inhibit EIF2AK3/PERK is independent of its ATPase activity. Also involved in the mitochondrial DNA damage response by promoting signaling between damaged genomes and the mitochondrial membrane, leading to activation of the integrated stress response (ISR). The chain is ATPase family AAA domain-containing protein 3A (Atad3a) from Rattus norvegicus (Rat).